Reading from the N-terminus, the 502-residue chain is Glutamate--tRNA ligase (502 aa).

The short motif at 9 to 19 (PSPTGFPHVGT) is the 'HIGH' region element. Positions 250–254 (KLSKR) match the 'KMSKS' region motif. Residue K253 participates in ATP binding.

This sequence belongs to the class-I aminoacyl-tRNA synthetase family. Glutamate--tRNA ligase type 1 subfamily. As to quaternary structure, monomer.

It is found in the cytoplasm. It carries out the reaction tRNA(Glu) + L-glutamate + ATP = L-glutamyl-tRNA(Glu) + AMP + diphosphate. Functionally, catalyzes the attachment of glutamate to tRNA(Glu) in a two-step reaction: glutamate is first activated by ATP to form Glu-AMP and then transferred to the acceptor end of tRNA(Glu). The sequence is that of Glutamate--tRNA ligase from Acinetobacter baumannii (strain AYE).